Consider the following 144-residue polypeptide: Peptide methionine sulfoxide reductase MsrB (144 aa).

The 123-residue stretch at 5-127 (KEEKIKSLNR…NSAALRFIPK (123 aa)) folds into the MsrB domain. Residue cysteine 116 is the Nucleophile of the active site.

It belongs to the MsrB Met sulfoxide reductase family.

The catalysed reaction is L-methionyl-[protein] + [thioredoxin]-disulfide + H2O = L-methionyl-(R)-S-oxide-[protein] + [thioredoxin]-dithiol. The polypeptide is Peptide methionine sulfoxide reductase MsrB (Bacillus velezensis (strain DSM 23117 / BGSC 10A6 / LMG 26770 / FZB42) (Bacillus amyloliquefaciens subsp. plantarum)).